Here is a 278-residue protein sequence, read N- to C-terminus: Maltodextrin transport system permease protein MdxG (278 aa).

A run of 6 helical transmembrane segments spans residues 12–32 (ICTY…LLIT), 74–94 (TLVI…LAGY), 108–128 (LIFF…AFYV), 131–151 (MLIG…GGGI), 183–203 (IFAS…ALWA), and 242–262 (VALF…LFFF). An ABC transmembrane type-1 domain is found at 71–263 (YSNTLVIALS…LPICVLFFFL (193 aa)).

It belongs to the binding-protein-dependent transport system permease family. MalFG subfamily. In terms of assembly, the complex is composed of two ATP-binding proteins (MsmX), two transmembrane proteins (MdxF and MdxG) and a solute-binding protein (MdxE).

Its subcellular location is the cell membrane. Part of the ABC transporter complex involved in maltodextrin import. Probably responsible for the translocation of the substrate across the membrane. This is Maltodextrin transport system permease protein MdxG (mdxG) from Bacillus subtilis (strain 168).